Consider the following 131-residue polypeptide: Holo-[acyl-carrier-protein] synthase (131 aa).

Mg(2+) is bound by residues aspartate 8 and glutamate 59.

The protein belongs to the P-Pant transferase superfamily. AcpS family. It depends on Mg(2+) as a cofactor.

The protein localises to the cytoplasm. It carries out the reaction apo-[ACP] + CoA = holo-[ACP] + adenosine 3',5'-bisphosphate + H(+). Transfers the 4'-phosphopantetheine moiety from coenzyme A to a Ser of acyl-carrier-protein. The sequence is that of Holo-[acyl-carrier-protein] synthase from Paramagnetospirillum magneticum (strain ATCC 700264 / AMB-1) (Magnetospirillum magneticum).